Reading from the N-terminus, the 181-residue chain is ADP-ribosylation factor 2-A (181 aa).

The N-myristoyl glycine moiety is linked to residue Gly2. Residues 24 to 31 (GLDAAGKT), 67 to 71 (DVGGQ), and 126 to 129 (NKQD) each bind GTP.

Belongs to the small GTPase superfamily. Arf family.

The protein resides in the golgi apparatus. Activated by AGD10. Its function is as follows. GTP-binding protein involved in protein trafficking; may modulate vesicle budding and uncoating within the Golgi apparatus. This is ADP-ribosylation factor 2-A (ARF2-A) from Arabidopsis thaliana (Mouse-ear cress).